A 146-amino-acid chain; its full sequence is Large ribosomal subunit protein uL15 (146 aa).

Over residues 1 to 13 (MKLHELKPAEGSR) the composition is skewed to basic and acidic residues. The disordered stretch occupies residues 1–51 (MKLHELKPAEGSRKVRNRVGRGIGSGNGKTAGRGHKGQNARSGGGVRLGFE). Composition is skewed to gly residues over residues 21–31 (RGIGSGNGKTA) and 42–51 (SGGGVRLGFE).

This sequence belongs to the universal ribosomal protein uL15 family. Part of the 50S ribosomal subunit.

In terms of biological role, binds to the 23S rRNA. In Bacillus mycoides (strain KBAB4) (Bacillus weihenstephanensis), this protein is Large ribosomal subunit protein uL15.